Consider the following 136-residue polypeptide: Large ribosomal subunit protein uL13 (136 aa).

Belongs to the universal ribosomal protein uL13 family. As to quaternary structure, part of the 50S ribosomal subunit.

In terms of biological role, this protein is one of the early assembly proteins of the 50S ribosomal subunit, although it is not seen to bind rRNA by itself. It is important during the early stages of 50S assembly. This chain is Large ribosomal subunit protein uL13, found in Thermoplasma volcanium (strain ATCC 51530 / DSM 4299 / JCM 9571 / NBRC 15438 / GSS1).